A 370-amino-acid polypeptide reads, in one-letter code: tRNA-specific 2-thiouridylase MnmA (370 aa).

ATP is bound by residues 11–18 (AMSGGVDS) and Met-37. The segment at 99-101 (NPD) is interaction with target base in tRNA. The Nucleophile role is filled by Cys-104. An intrachain disulfide couples Cys-104 to Cys-201. ATP is bound at residue Gly-129. Residues 151 to 153 (KDQ) are interaction with tRNA. Cys-201 acts as the Cysteine persulfide intermediate in catalysis. Residues 313 to 314 (RY) form an interaction with tRNA region.

The protein belongs to the MnmA/TRMU family. Interacts with TusE.

The protein resides in the cytoplasm. It carries out the reaction S-sulfanyl-L-cysteinyl-[protein] + uridine(34) in tRNA + AH2 + ATP = 2-thiouridine(34) in tRNA + L-cysteinyl-[protein] + A + AMP + diphosphate + H(+). Its function is as follows. Catalyzes the 2-thiolation of uridine at the wobble position (U34) of tRNA(Lys), tRNA(Glu) and tRNA(Gln), leading to the formation of s(2)U34, the first step of tRNA-mnm(5)s(2)U34 synthesis. Sulfur is provided by IscS, via a sulfur-relay system. Binds ATP and its substrate tRNAs. The protein is tRNA-specific 2-thiouridylase MnmA of Buchnera aphidicola subsp. Baizongia pistaciae (strain Bp).